We begin with the raw amino-acid sequence, 377 residues long: Flap endonuclease 1 (377 aa).

Positions 1-105 (MGIKGLNAII…HELSKRTARR (105 aa)) are N-domain. Aspartate 34 lines the Mg(2+) pocket. DNA-binding residues include arginine 47 and arginine 71. Aspartate 87 is a Mg(2+) binding site. Positions 99 to 119 (SKRTARREETEKKLQEATDQA) are disordered. The I-domain stretch occupies residues 120-251 (EKMKQERRLV…VTALKLIKEY (132 aa)). Mg(2+) is bound by residues glutamate 156, glutamate 158, aspartate 177, and aspartate 179. Glutamate 156 provides a ligand contact to DNA. Glycine 229 and aspartate 231 together coordinate DNA. Residue aspartate 231 coordinates Mg(2+). An interaction with PCNA region spans residues 338–346 (VQGRLDGFF).

It belongs to the XPG/RAD2 endonuclease family. FEN1 subfamily. As to quaternary structure, interacts with PCNA. Three molecules of FEN1 bind to one PCNA trimer with each molecule binding to one PCNA monomer. PCNA stimulates the nuclease activity without altering cleavage specificity. The cofactor is Mg(2+). Phosphorylated. Phosphorylation upon DNA damage induces relocalization to the nuclear plasma.

The protein localises to the nucleus. It localises to the nucleolus. It is found in the nucleoplasm. Its subcellular location is the mitochondrion. Its function is as follows. Structure-specific nuclease with 5'-flap endonuclease and 5'-3' exonuclease activities involved in DNA replication and repair. During DNA replication, cleaves the 5'-overhanging flap structure that is generated by displacement synthesis when DNA polymerase encounters the 5'-end of a downstream Okazaki fragment. It enters the flap from the 5'-end and then tracks to cleave the flap base, leaving a nick for ligation. Also involved in the long patch base excision repair (LP-BER) pathway, by cleaving within the apurinic/apyrimidinic (AP) site-terminated flap. Acts as a genome stabilization factor that prevents flaps from equilibrating into structures that lead to duplications and deletions. Also possesses 5'-3' exonuclease activity on nicked or gapped double-stranded DNA, and exhibits RNase H activity. Also involved in replication and repair of rDNA and in repairing mitochondrial DNA. The sequence is that of Flap endonuclease 1 from Vanderwaltozyma polyspora (strain ATCC 22028 / DSM 70294 / BCRC 21397 / CBS 2163 / NBRC 10782 / NRRL Y-8283 / UCD 57-17) (Kluyveromyces polysporus).